We begin with the raw amino-acid sequence, 117 residues long: MRVKRGFSAHRRHKKYLEMAKGFRGGRSRLYRTAREAVERSLVYAYIGRKQRKREFRKLWILRINAGAREHGLSYSKMMAGLSQAGIMLNRKILAELAVKQKEDFAKLVEIAKNQVH.

It belongs to the bacterial ribosomal protein bL20 family.

Functionally, binds directly to 23S ribosomal RNA and is necessary for the in vitro assembly process of the 50S ribosomal subunit. It is not involved in the protein synthesizing functions of that subunit. In Lawsonia intracellularis (strain PHE/MN1-00), this protein is Large ribosomal subunit protein bL20.